The following is a 154-amino-acid chain: Ribonuclease P protein subunit p21 (154 aa).

Residue A2 is modified to N-acetylalanine. Zn(2+) is bound by residues C62, C65, C92, and C95. The tract at residues 112-154 is disordered; it reads DRPEAQLGNQADSKPLQPLPNTAHSISDHLPEEKMQIQGSSDQ. Residues 137–146 show a composition bias toward basic and acidic residues; that stretch reads ISDHLPEEKM.

Belongs to the eukaryotic/archaeal RNase P protein component 4 family. As to quaternary structure, RNase P consists of a catalytic RNA moiety and about 10 protein subunits; POP1, POP4, POP5, POP7, RPP14, RPP21, RPP25, RPP30, RPP38 and RPP40. Within the RNase P complex, POP1, POP7 and RPP25 form the 'finger' subcomplex, POP5, RPP14, RPP40 and homodimeric RPP30 form the 'palm' subcomplex, and RPP21, POP4 and RPP38 form the 'wrist' subcomplex. All subunits of the RNase P complex interact with the catalytic RNA.

The protein localises to the nucleus. It localises to the nucleolus. Functionally, component of ribonuclease P, a ribonucleoprotein complex that generates mature tRNA molecules by cleaving their 5'-ends. The polypeptide is Ribonuclease P protein subunit p21 (RPP21) (Macaca mulatta (Rhesus macaque)).